The chain runs to 506 residues: ATP synthase subunit alpha (506 aa).

G170–T177 is a binding site for ATP.

This sequence belongs to the ATPase alpha/beta chains family. F-type ATPases have 2 components, CF(1) - the catalytic core - and CF(0) - the membrane proton channel. CF(1) has five subunits: alpha(3), beta(3), gamma(1), delta(1), epsilon(1). CF(0) has four main subunits: a(1), b(1), b'(1) and c(9-12).

The protein resides in the cellular thylakoid membrane. It carries out the reaction ATP + H2O + 4 H(+)(in) = ADP + phosphate + 5 H(+)(out). Its function is as follows. Produces ATP from ADP in the presence of a proton gradient across the membrane. The alpha chain is a regulatory subunit. This chain is ATP synthase subunit alpha, found in Synechococcus sp. (strain JA-2-3B'a(2-13)) (Cyanobacteria bacterium Yellowstone B-Prime).